The sequence spans 268 residues: MAKAEENLRDKCRWSLGGMTALVTGGSKGLGEAVVEELAMLGARVHTCARNETQLQECVREWQAKGFEVTTSVCDVSSRDQREKLMENVASIFQGKLNILVNNAGTGITKPTTEYTAQDYSFLMATNLDSAFHLSQLAHPLLKASGSGSIVLMSSTAGVVHINVGSIYGATKGAMNQLAKNLACEWARDNIRVNSVCPWFIATPLYLNDEELKKEVERKTPMGRVGNANEVSSLVAFLCFPAASYITGQTICVDGGFTVNCFSFKPVL.

22 to 46 is an NADP(+) binding site; the sequence is LVTGGSKGLGEAVVEELAMLGARVH. S155 contacts substrate. The Proton acceptor role is filled by Y168.

The protein belongs to the short-chain dehydrogenases/reductases (SDR) family. SDR65C subfamily.

This is Tropinone reductase homolog At2g29170 from Arabidopsis thaliana (Mouse-ear cress).